Consider the following 1068-residue polypeptide: MVSSDRPVSLEDEVSHSMKEMIGGCCVCSDERGWAENPLVYCDGHGCSVAVHQACYGIVQVPTGPWFCRKCESQERAARVRCELCPHKDGALKRTDNGGWAHVVCALYIPEVQFANVSTMEPIVLQSVPHDRYNKTCYICDEQGRESKAATGACMTCNKHGCRQAFHVTCAQFAGLLCEEEGNGADNVQYCGYCKYHFSKLKKSKRGSNRSYEQSLSDSSSHSQDKHHEKEKKKYKEKDKHKQKHKKQPEPSPALVPSLTVTTEKTYTSTSNNSISGSLKRLEDTAARFTNANFQEVSAHTSSGKDVSEARGSEGKGKKSSAHSSGQRGRKPGAGRNPGTAVSASSPFPQGSFSGTPGSVKSSSGSSVQSPQDFLSFTDSDLRSDSYTHTQQPSSTKDVHKGESGSQEAAVNSFSSLVGHPVTSTVISQPKSFDNSPGELGSSSLPTAGYKRAQTSGIEEEAVKEKKRKGNKQSKHGPGRPKGNKNQENVSHLSVSSASPTSSVASAAGSVTSSSLQKSPTLLRNGSLQSLSVGSSPVGSEISMQYRHDGACPTTTFSELLNAIHNGIYNSNDVAVSFPNVVSGSGSSTPVSSSHIPQQSSGHLQQVGALSPSAASSVTPAAATTQANTVSGSSLSQAPAHMYGSRLNQNPSMAVLIAQSESSQTDQDLGDNARSLGGRGSSPRGSLSPRSPVSNLQLRYDQPSNSSLETVPPVAASIEQLLERQWSEGQQFLLEQGTPGDILGMLKSLHQLQVENRRLEEQIKNLTAKKERLQLLNAQLSVPFPAITTNPSPSHQMHTYTAQTAPPPDSLNSSKSPHIGNSFLPDNSLPVLNQDLTSSGQSTSSSSALSTPPPAGQSPAQQSSGVSGVQQVNGVTVGALASGMQTVTSTIPAVSAVGGIIGALPGNQLAINGIVGALNGVIQTPVTISQNPAPLTHTSVPPNAAHPMPAAALTNSASGLGLLSDQQRQMFIQQQQFQQLLNSQQLTPEQHQAFLYQLMQQQHHPPELQQLQLPGPTQIPINNLLAGAQAPPLHTATTNPFLTIHGDSTSQKVTRLSDKTGPVAQEKS.

The segment at 22–74 (IGGCCVCSDERGWAENPLVYCDGHGCSVAVHQACYGIVQVPTGPWFCRKCESQ) adopts a PHD-type 1 zinc-finger fold. The C2HC pre-PHD-type zinc finger occupies 79–112 (RVRCELCPHKDGALKRTDNGGWAHVVCALYIPEV). Positions 106–190 (ALYIPEVQFA…EGNGADNVQY (85 aa)) are required for interaction with histone H3. Residues 135–198 (KTCYICDEQG…QYCGYCKYHF (64 aa)) form a PHD-type 2 zinc finger. The segment at 207–260 (GSNRSYEQSLSDSSSHSQDKHHEKEKKKYKEKDKHKQKHKKQPEPSPALVPSLT) is disordered. Ser217 is subject to Phosphoserine. The segment covering 223-240 (SQDKHHEKEKKKYKEKDK) has biased composition (basic and acidic residues). Ser252 is modified (phosphoserine). Lys280 is covalently cross-linked (Glycyl lysine isopeptide (Lys-Gly) (interchain with G-Cter in SUMO2)). Polar residues predominate over residues 296-305 (EVSAHTSSGK). Disordered regions lie at residues 296–416 (EVSA…SFSS) and 428–506 (SQPK…SVAS). Over residues 306–317 (DVSEARGSEGKG) the composition is skewed to basic and acidic residues. Residues 340-351 (TAVSASSPFPQG) are compositionally biased toward polar residues. The segment covering 352–372 (SFSGTPGSVKSSSGSSVQSPQ) has biased composition (low complexity). 3 stretches are compositionally biased toward polar residues: residues 387-396 (YTHTQQPSST), 404-416 (SGSQ…SFSS), and 428-446 (SQPK…SSLP). Position 436 is a phosphoserine (Ser436). Basic residues predominate over residues 465-483 (EKKRKGNKQSKHGPGRPKG). Residues 490-506 (VSHLSVSSASPTSSVAS) are compositionally biased toward low complexity. A Phosphoserine modification is found at Ser532. Low complexity predominate over residues 583–594 (SGSGSSTPVSSS). Disordered stretches follow at residues 583–613 (SGSG…LSPS) and 660–698 (SESS…NLQL). Polar residues predominate over residues 595–604 (HIPQQSSGHL). Low complexity predominate over residues 681 to 692 (SSPRGSLSPRSP). Residues Ser686, Ser688, and Ser691 each carry the phosphoserine modification. The leucine-zipper stretch occupies residues 752 to 780 (LQVENRRLEEQIKNLTAKKERLQLLNAQL). Disordered stretches follow at residues 786 to 869 (AITT…VSGV) and 1040 to 1068 (PFLT…QEKS). Polar residues predominate over residues 787–816 (ITTNPSPSHQMHTYTAQTAPPPDSLNSSKS). Low complexity-rich tracts occupy residues 836 to 850 (LTSS…SALS) and 857 to 869 (QSPA…VSGV). Polar residues predominate over residues 1040–1054 (PFLTIHGDSTSQKVT).

In terms of assembly, self-associates. Interacts with FSTL3; the interaction enhances MLLT10 in vitro transcriptional activity and self-association. Interacts with YEATS4. Interacts with SS18. Interacts with DOT1L. Interacts with histone H3; interaction is necessary for MLLT10 binding to nucleosomes; interaction is inhibited by histone H3 'Lys-27' methylations (H3K27me1, H3K27me2 and H3K27me3) amd acetylation; interaction stabilizes association of MLLT10 at chromatin; interaction is essential for histone H3 'Lys-79' dimethylation (H3K79me2).

The protein resides in the nucleus. In terms of biological role, probably involved in transcriptional regulation. Binds to cruciform DNA. In cells, binding to unmodified histone H3 regulates DOT1L functions including histone H3 'Lys-79' dimethylation (H3K79me2) and gene activation. The chain is Protein AF-10 from Mus musculus (Mouse).